The primary structure comprises 261 residues: MAHQAHAYHMVDPSPWPLTGAIAALLLTSGTAVWFHFHSLTLLTLGNILLLLTMYQWWRDIIREGTFQGHHTPPVQKGLRYGMILFITSEVFFFLGFFWAFYHASLAPTPELGGCWPPAGITTLDPFEVPLLNTAVLLASGVTVTWAHHSIMEGERKQTIQALTLTILLGFYFTFLQGMEYYEAPFTIADGVYGSTFFVATGFHGLHVIIGSTFLAVCLLRQVQYHFTSEHHFGFEAAAWYWHFVDVVWLFLYVSIYWWGS.

At 1-15 (MAHQAHAYHMVDPSP) the chain is on the mitochondrial matrix side. A helical transmembrane segment spans residues 16-34 (WPLTGAIAALLLTSGTAVW). The Mitochondrial intermembrane portion of the chain corresponds to 35–40 (FHFHSL). The chain crosses the membrane as a helical span at residues 41–66 (TLLTLGNILLLLTMYQWWRDIIREGT). Residues 67–72 (FQGHHT) lie on the Mitochondrial matrix side of the membrane. A helical transmembrane segment spans residues 73–105 (PPVQKGLRYGMILFITSEVFFFLGFFWAFYHAS). Residues 106 to 128 (LAPTPELGGCWPPAGITTLDPFE) are Mitochondrial intermembrane-facing. Residues 129-152 (VPLLNTAVLLASGVTVTWAHHSIM) form a helical membrane-spanning segment. Residues 153–155 (EGE) lie on the Mitochondrial matrix side of the membrane. A helical membrane pass occupies residues 156–183 (RKQTIQALTLTILLGFYFTFLQGMEYYE). Topologically, residues 184-190 (APFTIAD) are mitochondrial intermembrane. A helical membrane pass occupies residues 191 to 223 (GVYGSTFFVATGFHGLHVIIGSTFLAVCLLRQV). Over 224-232 (QYHFTSEHH) the chain is Mitochondrial matrix. Residues 233-256 (FGFEAAAWYWHFVDVVWLFLYVSI) form a helical membrane-spanning segment. Residues 257–261 (YWWGS) lie on the Mitochondrial intermembrane side of the membrane.

It belongs to the cytochrome c oxidase subunit 3 family. In terms of assembly, component of the cytochrome c oxidase (complex IV, CIV), a multisubunit enzyme composed of 14 subunits. The complex is composed of a catalytic core of 3 subunits MT-CO1, MT-CO2 and MT-CO3, encoded in the mitochondrial DNA, and 11 supernumerary subunits COX4I, COX5A, COX5B, COX6A, COX6B, COX6C, COX7A, COX7B, COX7C, COX8 and NDUFA4, which are encoded in the nuclear genome. The complex exists as a monomer or a dimer and forms supercomplexes (SCs) in the inner mitochondrial membrane with NADH-ubiquinone oxidoreductase (complex I, CI) and ubiquinol-cytochrome c oxidoreductase (cytochrome b-c1 complex, complex III, CIII), resulting in different assemblies (supercomplex SCI(1)III(2)IV(1) and megacomplex MCI(2)III(2)IV(2)).

It localises to the mitochondrion inner membrane. The enzyme catalyses 4 Fe(II)-[cytochrome c] + O2 + 8 H(+)(in) = 4 Fe(III)-[cytochrome c] + 2 H2O + 4 H(+)(out). Functionally, component of the cytochrome c oxidase, the last enzyme in the mitochondrial electron transport chain which drives oxidative phosphorylation. The respiratory chain contains 3 multisubunit complexes succinate dehydrogenase (complex II, CII), ubiquinol-cytochrome c oxidoreductase (cytochrome b-c1 complex, complex III, CIII) and cytochrome c oxidase (complex IV, CIV), that cooperate to transfer electrons derived from NADH and succinate to molecular oxygen, creating an electrochemical gradient over the inner membrane that drives transmembrane transport and the ATP synthase. Cytochrome c oxidase is the component of the respiratory chain that catalyzes the reduction of oxygen to water. Electrons originating from reduced cytochrome c in the intermembrane space (IMS) are transferred via the dinuclear copper A center (CU(A)) of subunit 2 and heme A of subunit 1 to the active site in subunit 1, a binuclear center (BNC) formed by heme A3 and copper B (CU(B)). The BNC reduces molecular oxygen to 2 water molecules using 4 electrons from cytochrome c in the IMS and 4 protons from the mitochondrial matrix. This Oncorhynchus mykiss (Rainbow trout) protein is Cytochrome c oxidase subunit 3 (mt-co3).